Reading from the N-terminus, the 159-residue chain is uncharacterized protein (159 aa).

It to M.jannaschii MJECL20.

This is an uncharacterized protein from Methanocaldococcus jannaschii (strain ATCC 43067 / DSM 2661 / JAL-1 / JCM 10045 / NBRC 100440) (Methanococcus jannaschii).